The sequence spans 339 residues: Ribosomal RNA small subunit methyltransferase H (339 aa).

Residues 52–54, D71, F98, D130, and Q137 contribute to the S-adenosyl-L-methionine site; that span reads GGH.

It belongs to the methyltransferase superfamily. RsmH family.

It localises to the cytoplasm. It carries out the reaction cytidine(1402) in 16S rRNA + S-adenosyl-L-methionine = N(4)-methylcytidine(1402) in 16S rRNA + S-adenosyl-L-homocysteine + H(+). In terms of biological role, specifically methylates the N4 position of cytidine in position 1402 (C1402) of 16S rRNA. The protein is Ribosomal RNA small subunit methyltransferase H of Corynebacterium diphtheriae (strain ATCC 700971 / NCTC 13129 / Biotype gravis).